Consider the following 269-residue polypeptide: Chymotrypsin-like elastase family member 2A (269 aa).

The signal sequence occupies residues 1–16 (MIRALLLSTLVAGALS). The propeptide at 17-28 (CGVPTYPPQLSR) is activation peptide. One can recognise a Peptidase S1 domain in the interval 29–267 (VVGGEDARPN…YNDWISSVIE (239 aa)). Cys-58 and Cys-74 are disulfide-bonded. Active-site charge relay system residues include His-73 and Asp-121. Disulfide bonds link Cys-155-Cys-222, Cys-186-Cys-202, and Cys-212-Cys-243. Ser-216 functions as the Charge relay system in the catalytic mechanism.

Belongs to the peptidase S1 family. Elastase subfamily. Interacts with CPA1. Interacts with SERPINA1. Pancreas.

The protein localises to the secreted. It catalyses the reaction Preferential cleavage: Leu-|-Xaa, Met-|-Xaa and Phe-|-Xaa. Hydrolyzes elastin.. Elastase that enhances insulin signaling and might have a physiologic role in cellular glucose metabolism. Circulates in plasma and reduces platelet hyperactivation, triggers both insulin secretion and degradation, and increases insulin sensitivity. The polypeptide is Chymotrypsin-like elastase family member 2A (CELA2A) (Bos taurus (Bovine)).